The sequence spans 126 residues: Lymphocyte antigen 6 complex locus protein G6c (126 aa).

Residues 1–19 (MKHLLLLTLSALLYCWVSA) form the signal peptide. The region spanning 21 to 112 (TRCHSCYKVP…PRPTPALALI (92 aa)) is the UPAR/Ly6 domain. Disulfide bonds link Cys23/Cys48, Cys26/Cys34, and Cys40/Cys66. The N-linked (GlcNAc...) (high mannose) asparagine glycan is linked to Asn89. Cys93 and Cys98 are disulfide-bonded. The GPI-anchor amidated serine moiety is linked to residue Ser100. The propeptide at 101 to 126 (PAPRPTPALALISLTSLAGLGLWLLH) is removed in mature form.

Monomer. N-glycosylated. Highly expressed at the leading edges of cells, on filopodia.

It localises to the cell membrane. This chain is Lymphocyte antigen 6 complex locus protein G6c (Ly6g6c), found in Mus musculus (Mouse).